Consider the following 37-residue polypeptide: Myo-inositol-binding protein (37 aa).

This sequence belongs to the bacterial solute-binding protein 2 family.

It localises to the periplasm. The polypeptide is Myo-inositol-binding protein (Pseudomonas sp).